The following is a 414-amino-acid chain: Dothistromin biosynthesis peroxidase dotB (414 aa).

Residues 1-18 form the signal peptide; the sequence is MHFFSAIVLTCLASTAVA. Residue Cys72 participates in heme binding. N-linked (GlcNAc...) asparagine glycans are attached at residues Asn187, Asn241, and Asn328.

It belongs to the chloroperoxidase family. Requires heme b as cofactor.

The protein operates within mycotoxin biosynthesis. In terms of biological role, peroxidase; part of the fragmented gene cluster that mediates the biosynthesis of dothistromin (DOTH), a polyketide toxin very similar in structure to the aflatoxin precursor, versicolorin B. The first step of the pathway is the conversion of acetate to norsolorinic acid (NOR) and requires the fatty acid synthase subunits hexA and hexB, as well as the polyketide synthase pksA. PksA combines a hexanoyl starter unit and 7 malonyl-CoA extender units to synthesize the precursor NOR. The hexanoyl starter unit is provided to the acyl-carrier protein (ACP) domain by the fungal fatty acid synthase hexA/hexB. The second step is the conversion of NOR to averantin (AVN) and requires the norsolorinic acid ketoreductase nor1, which catalyzes the dehydration of norsolorinic acid to form (1'S)-averantin. The cytochrome P450 monooxygenase avnA then catalyzes the hydroxylation of AVN to 5'hydroxyaverantin (HAVN). The next step is performed by adhA that transforms HAVN to averufin (AVF). Averufin might then be converted to hydroxyversicolorone by cypX and avfA. Hydroxyversicolorone is further converted versiconal hemiacetal acetate (VHA) by moxY. VHA is then the substrate for the versiconal hemiacetal acetate esterase est1 to yield versiconal (VAL). Versicolorin B synthase vbsA then converts VAL to versicolorin B (VERB) by closing the bisfuran ring. Then, the activity of the versicolorin B desaturase verB leads to versicolorin A (VERA). DotB, a predicted chloroperoxidase, may perform epoxidation of the A-ring of VERA. Alternatively, a cytochrome P450, such as cypX or avnA could catalyze this step. It is also possible that another, uncharacterized, cytochrome P450 enzyme is responsible for this step. Opening of the epoxide could potentially be achieved by the epoxide hydrolase epoA. However, epoA seems not to be required for DOTH biosynthesis, but other epoxide hydrolases may have the ability to complement this hydrolysis. Alternatively, opening of the epoxide ring could be achieved non-enzymatically. The next step is the deoxygenation of ring A to yield the 5,8-dihydroxyanthraquinone which is most likely catalyzed by the NADPH dehydrogenase encoded by ver1. The last stages of DOTH biosynthesis are proposed to involve hydroxylation of the bisfuran. OrdB and norB might have oxidative roles here. An alternative possibility is that cytochrome P450 monoogenases such as avnA and cypX might perform these steps in addition to previously proposed steps. This Dothistroma septosporum (Red band needle blight fungus) protein is Dothistromin biosynthesis peroxidase dotB.